Reading from the N-terminus, the 76-residue chain is DNA-directed RNA polymerase subunit Rpo10 (76 aa).

Zn(2+)-binding residues include cysteine 16, cysteine 19, cysteine 53, and cysteine 54.

This sequence belongs to the archaeal Rpo10/eukaryotic RPB10 RNA polymerase subunit family. In terms of assembly, part of the RNA polymerase complex. Zn(2+) serves as cofactor.

It localises to the cytoplasm. It carries out the reaction RNA(n) + a ribonucleoside 5'-triphosphate = RNA(n+1) + diphosphate. Its function is as follows. DNA-dependent RNA polymerase (RNAP) catalyzes the transcription of DNA into RNA using the four ribonucleoside triphosphates as substrates. The chain is DNA-directed RNA polymerase subunit Rpo10 from Archaeoglobus fulgidus (strain ATCC 49558 / DSM 4304 / JCM 9628 / NBRC 100126 / VC-16).